The chain runs to 911 residues: Valine--tRNA ligase (911 aa).

Residues 53–63 (PNVTGTLHLGH) carry the 'HIGH' region motif. Positions 533–537 (KMSKS) match the 'KMSKS' region motif. ATP is bound at residue Lys-536. Residues 845–910 (KEIERLTKEL…NRLAMLRSMQ (66 aa)) adopt a coiled-coil conformation.

This sequence belongs to the class-I aminoacyl-tRNA synthetase family. ValS type 1 subfamily. Monomer.

The protein localises to the cytoplasm. It catalyses the reaction tRNA(Val) + L-valine + ATP = L-valyl-tRNA(Val) + AMP + diphosphate. Functionally, catalyzes the attachment of valine to tRNA(Val). As ValRS can inadvertently accommodate and process structurally similar amino acids such as threonine, to avoid such errors, it has a 'posttransfer' editing activity that hydrolyzes mischarged Thr-tRNA(Val) in a tRNA-dependent manner. The polypeptide is Valine--tRNA ligase (Symbiobacterium thermophilum (strain DSM 24528 / JCM 14929 / IAM 14863 / T)).